Here is a 656-residue protein sequence, read N- to C-terminus: Translation factor GUF1, mitochondrial (656 aa).

A mitochondrion-targeting transit peptide spans 1–28; it reads MWKGLLQSTRAAWRGPCVRAPRLPFFRR. Residues 55–235 form the tr-type G domain; the sequence is ERYRNFSIVA…NVIENIPGPD (181 aa). Residues 64-71, 128-132, and 182-185 contribute to the GTP site; these read AHVDHGKS, DTPGH, and NKID.

It belongs to the TRAFAC class translation factor GTPase superfamily. Classic translation factor GTPase family. LepA subfamily.

It is found in the mitochondrion inner membrane. The enzyme catalyses GTP + H2O = GDP + phosphate + H(+). In terms of biological role, promotes mitochondrial protein synthesis. May act as a fidelity factor of the translation reaction, by catalyzing a one-codon backward translocation of tRNAs on improperly translocated ribosomes. Binds to mitochondrial ribosomes in a GTP-dependent manner. This chain is Translation factor GUF1, mitochondrial, found in Yarrowia lipolytica (strain CLIB 122 / E 150) (Yeast).